Here is a 314-residue protein sequence, read N- to C-terminus: Dihydroorotate dehydrogenase (fumarate) (314 aa).

Residues Lys-46, 70 to 74 (NSMGL), and Asn-130 each bind substrate. 46–47 (KS) provides a ligand contact to FMN. FMN is bound at residue Asn-130. Catalysis depends on nucleophile residues Ser-132 and Cys-133. FMN is bound by residues Lys-167 and Ile-195. 196–197 (NS) provides a ligand contact to substrate. FMN-binding positions include Gly-224, 252–253 (GG), and 274–275 (GT).

Belongs to the dihydroorotate dehydrogenase family. Type 1 subfamily. Homodimer. The cofactor is FMN.

It localises to the cytoplasm. The catalysed reaction is (S)-dihydroorotate + fumarate = orotate + succinate. It functions in the pathway pyrimidine metabolism; UMP biosynthesis via de novo pathway. With respect to regulation, the activity is independent of the presence of oxygen. In terms of biological role, catalyzes the conversion of dihydroorotate to orotate with fumarate as the electron acceptor. This chain is Dihydroorotate dehydrogenase (fumarate) (URA1), found in Lachancea kluyveri (strain ATCC 58438 / CBS 3082 / BCRC 21498 / NBRC 1685 / JCM 7257 / NCYC 543 / NRRL Y-12651) (Yeast).